The chain runs to 439 residues: Xylose isomerase (439 aa).

Catalysis depends on residues histidine 100 and aspartate 103. Mg(2+) contacts are provided by glutamate 231, glutamate 267, histidine 270, aspartate 295, aspartate 306, aspartate 308, and aspartate 338.

This sequence belongs to the xylose isomerase family. Homotetramer. Requires Mg(2+) as cofactor.

It localises to the cytoplasm. The enzyme catalyses alpha-D-xylose = alpha-D-xylulofuranose. The chain is Xylose isomerase from Rhodopirellula baltica (strain DSM 10527 / NCIMB 13988 / SH1).